Reading from the N-terminus, the 347-residue chain is Holliday junction branch migration complex subunit RuvB (347 aa).

A large ATPase domain (RuvB-L) region spans residues 1 to 186 (MKDENSISFL…FGITARFELY (186 aa)). ATP-binding positions include leucine 25, arginine 26, glycine 67, lysine 70, threonine 71, threonine 72, 133–135 (EDY), arginine 176, tyrosine 186, and arginine 223. Position 71 (threonine 71) interacts with Mg(2+). The tract at residues 187–257 (SEIELVEIIK…IVSIGLEMLR (71 aa)) is small ATPAse domain (RuvB-S). The segment at 260–347 (GEGLDEQDRN…GLNENQRVSF (88 aa)) is head domain (RuvB-H). 2 residues coordinate DNA: arginine 315 and arginine 320.

The protein belongs to the RuvB family. As to quaternary structure, homohexamer. Forms an RuvA(8)-RuvB(12)-Holliday junction (HJ) complex. HJ DNA is sandwiched between 2 RuvA tetramers; dsDNA enters through RuvA and exits via RuvB. An RuvB hexamer assembles on each DNA strand where it exits the tetramer. Each RuvB hexamer is contacted by two RuvA subunits (via domain III) on 2 adjacent RuvB subunits; this complex drives branch migration. In the full resolvosome a probable DNA-RuvA(4)-RuvB(12)-RuvC(2) complex forms which resolves the HJ.

The protein resides in the cytoplasm. The enzyme catalyses ATP + H2O = ADP + phosphate + H(+). The RuvA-RuvB-RuvC complex processes Holliday junction (HJ) DNA during genetic recombination and DNA repair, while the RuvA-RuvB complex plays an important role in the rescue of blocked DNA replication forks via replication fork reversal (RFR). RuvA specifically binds to HJ cruciform DNA, conferring on it an open structure. The RuvB hexamer acts as an ATP-dependent pump, pulling dsDNA into and through the RuvAB complex. RuvB forms 2 homohexamers on either side of HJ DNA bound by 1 or 2 RuvA tetramers; 4 subunits per hexamer contact DNA at a time. Coordinated motions by a converter formed by DNA-disengaged RuvB subunits stimulates ATP hydrolysis and nucleotide exchange. Immobilization of the converter enables RuvB to convert the ATP-contained energy into a lever motion, pulling 2 nucleotides of DNA out of the RuvA tetramer per ATP hydrolyzed, thus driving DNA branch migration. The RuvB motors rotate together with the DNA substrate, which together with the progressing nucleotide cycle form the mechanistic basis for DNA recombination by continuous HJ branch migration. Branch migration allows RuvC to scan DNA until it finds its consensus sequence, where it cleaves and resolves cruciform DNA. The polypeptide is Holliday junction branch migration complex subunit RuvB (Borreliella burgdorferi (strain ATCC 35210 / DSM 4680 / CIP 102532 / B31) (Borrelia burgdorferi)).